A 292-amino-acid polypeptide reads, in one-letter code: Pyridoxal 5'-phosphate synthase subunit PdxS (292 aa).

Residue Asp22 participates in D-ribose 5-phosphate binding. Catalysis depends on Lys79, which acts as the Schiff-base intermediate with D-ribose 5-phosphate. A D-ribose 5-phosphate-binding site is contributed by Gly151. Residue Arg163 coordinates D-glyceraldehyde 3-phosphate. D-ribose 5-phosphate is bound by residues Gly212 and Gly233–Ser234.

Belongs to the PdxS/SNZ family. As to quaternary structure, in the presence of PdxT, forms a dodecamer of heterodimers.

The catalysed reaction is aldehydo-D-ribose 5-phosphate + D-glyceraldehyde 3-phosphate + L-glutamine = pyridoxal 5'-phosphate + L-glutamate + phosphate + 3 H2O + H(+). It functions in the pathway cofactor biosynthesis; pyridoxal 5'-phosphate biosynthesis. Functionally, catalyzes the formation of pyridoxal 5'-phosphate from ribose 5-phosphate (RBP), glyceraldehyde 3-phosphate (G3P) and ammonia. The ammonia is provided by the PdxT subunit. Can also use ribulose 5-phosphate and dihydroxyacetone phosphate as substrates, resulting from enzyme-catalyzed isomerization of RBP and G3P, respectively. The polypeptide is Pyridoxal 5'-phosphate synthase subunit PdxS (Thermoanaerobacter pseudethanolicus (strain ATCC 33223 / 39E) (Clostridium thermohydrosulfuricum)).